The primary structure comprises 472 residues: UDP-N-acetylmuramate--L-alanine ligase (472 aa).

Residue 123 to 129 (GSHGKTT) coordinates ATP.

The protein belongs to the MurCDEF family.

It localises to the cytoplasm. The enzyme catalyses UDP-N-acetyl-alpha-D-muramate + L-alanine + ATP = UDP-N-acetyl-alpha-D-muramoyl-L-alanine + ADP + phosphate + H(+). The protein operates within cell wall biogenesis; peptidoglycan biosynthesis. In terms of biological role, cell wall formation. The polypeptide is UDP-N-acetylmuramate--L-alanine ligase (Solibacter usitatus (strain Ellin6076)).